The primary structure comprises 161 residues: Low molecular weight phosphotyrosine protein phosphatase (161 aa).

Cys14 serves as the catalytic Nucleophile. The Transition state stabilizer role is filled by Arg20. Residue Ser57 is modified to Phosphoserine. The Proton donor role is filled by Asp133.

The protein belongs to the low molecular weight phosphotyrosine protein phosphatase family.

The protein resides in the cytoplasm. The catalysed reaction is O-phospho-L-tyrosyl-[protein] + H2O = L-tyrosyl-[protein] + phosphate. The enzyme catalyses a phosphate monoester + H2O = an alcohol + phosphate. Functionally, acts on tyrosine phosphorylated proteins, low-MW aryl phosphates and natural and synthetic acyl phosphates. The sequence is that of Low molecular weight phosphotyrosine protein phosphatase from Saccharomyces cerevisiae (strain ATCC 204508 / S288c) (Baker's yeast).